We begin with the raw amino-acid sequence, 835 residues long: Axin-1 (835 aa).

A disordered region spans residues 16-60; that stretch reads LGSSFTEDAPRPPVPGEEGDLVSSDGRQYNHSFYSSKSDSLKNEA. Residues 40–53 show a composition bias toward polar residues; sequence DGRQYNHSFYSSKS. An RGS domain is found at 92–214; the sequence is SLHSLLDDQD…LKSDIYLEYT (123 aa). The tract at residues 318-349 is disordered; that stretch reads ATSANDSEQQSMSSDADTLSLTDSSVDGVPPY. Residues 328–344 show a composition bias toward low complexity; it reads SMSSDADTLSLTDSSVD. The tract at residues 351–436 is interaction with GSK3B; the sequence is YRKPHRREIH…DADISTGPSL (86 aa). The segment at 437-512 is interaction with beta-catenin; the sequence is ANHRVPPAVH…SPDGLPAGKI (76 aa). Disordered regions lie at residues 485–530 and 602–627; these read KTPG…QARQ and GYSSKGSTLSKRPVRKGEDGRNFEMR. Basic and acidic residues predominate over residues 616–627; it reads RKGEDGRNFEMR. The DIX domain maps to 753–835; that stretch reads CENITVAYYF…KIIGKVEKVD (83 aa).

In terms of assembly, homodimer. Interacts with dixdc1. Interacts with hwa; leading to promote the tankyrase-mediated degradation of axin1. In terms of processing, ADP-ribosylated by tankyrase tnks and tnks2. Poly-ADP-ribosylated protein is recognized by rnf146, followed by ubiquitination at 'Lys-48' and subsequent activation of the Wnt signaling pathway. Post-translationally, ubiquitinated by rnf146 when poly-ADP-ribosylated, leading to its degradation and subsequent activation of the Wnt signaling pathway.

It localises to the cytoplasm. The protein resides in the nucleus. Its subcellular location is the membrane. It is found in the cell membrane. Functionally, component of the beta-catenin destruction complex required for regulating ctnnb1 levels through phosphorylation and ubiquitination, and modulating Wnt-signaling. Controls dorsoventral patterning via two opposing effects: down-regulates ctnnb1 to inhibit the Wnt signaling pathway and ventralize embryos, but also dorsalizes embryos by activating a Wnt-independent JNK signaling pathway. The chain is Axin-1 (axin1) from Danio rerio (Zebrafish).